The primary structure comprises 147 residues: Hemoglobin subunit beta-3 (147 aa).

The Globin domain maps to 3–147; it reads HWTAEEKAVI…LVDALSHSYH (145 aa). H64 and H93 together coordinate heme b.

It belongs to the globin family. Heterotetramer of two alpha chains and two beta chains. Red blood cells.

In terms of biological role, this is a tadpole (larval) beta chain. This is Hemoglobin subunit beta-3 from Aquarana catesbeiana (American bullfrog).